Here is a 62-residue protein sequence, read N- to C-terminus: Large ribosomal subunit protein bL28 (62 aa).

It belongs to the bacterial ribosomal protein bL28 family.

The protein is Large ribosomal subunit protein bL28 of Caldanaerobacter subterraneus subsp. tengcongensis (strain DSM 15242 / JCM 11007 / NBRC 100824 / MB4) (Thermoanaerobacter tengcongensis).